Consider the following 314-residue polypeptide: uncharacterized protein (314 aa).

The interval 39 to 146 is disordered; sequence QENVDSDSTD…SDYSSDESNS (108 aa). The span at 56–76 shows a compositional bias: polar residues; that stretch reads STKNVSRNIPKNIPKSISKNI. The segment covering 88–131 has biased composition (low complexity); it reads IPKNVSKNIPKNVPKNVSKNIPKNIPKNVPNKSRNKYSNYSEDS. Acidic residues predominate over residues 132 to 141; it reads NYSEDSDYSS.

This is an uncharacterized protein from Acanthamoeba polyphaga mimivirus (APMV).